Reading from the N-terminus, the 200-residue chain is 3-isopropylmalate dehydratase small subunit (200 aa).

Belongs to the LeuD family. LeuD type 1 subfamily. In terms of assembly, heterodimer of LeuC and LeuD.

It catalyses the reaction (2R,3S)-3-isopropylmalate = (2S)-2-isopropylmalate. Its pathway is amino-acid biosynthesis; L-leucine biosynthesis; L-leucine from 3-methyl-2-oxobutanoate: step 2/4. Its function is as follows. Catalyzes the isomerization between 2-isopropylmalate and 3-isopropylmalate, via the formation of 2-isopropylmaleate. This Actinobacillus succinogenes (strain ATCC 55618 / DSM 22257 / CCUG 43843 / 130Z) protein is 3-isopropylmalate dehydratase small subunit.